The primary structure comprises 808 residues: Glycerol-3-phosphate acyltransferase (808 aa).

Positions 306–311 (HRSHMD) match the HXXXXD motif motif.

Belongs to the GPAT/DAPAT family.

The protein localises to the cell inner membrane. It carries out the reaction sn-glycerol 3-phosphate + an acyl-CoA = a 1-acyl-sn-glycero-3-phosphate + CoA. It functions in the pathway phospholipid metabolism; CDP-diacylglycerol biosynthesis; CDP-diacylglycerol from sn-glycerol 3-phosphate: step 1/3. The chain is Glycerol-3-phosphate acyltransferase from Vibrio parahaemolyticus serotype O3:K6 (strain RIMD 2210633).